The chain runs to 570 residues: Sulfite reductase [NADPH] hemoprotein beta-component (570 aa).

Residues C433, C439, C478, and C482 each coordinate [4Fe-4S] cluster. Residue C482 coordinates siroheme.

The protein belongs to the nitrite and sulfite reductase 4Fe-4S domain family. Alpha(8)-beta(8). The alpha component is a flavoprotein, the beta component is a hemoprotein. Siroheme is required as a cofactor. [4Fe-4S] cluster serves as cofactor.

The enzyme catalyses hydrogen sulfide + 3 NADP(+) + 3 H2O = sulfite + 3 NADPH + 4 H(+). It participates in sulfur metabolism; hydrogen sulfide biosynthesis; hydrogen sulfide from sulfite (NADPH route): step 1/1. Its function is as follows. Component of the sulfite reductase complex that catalyzes the 6-electron reduction of sulfite to sulfide. This is one of several activities required for the biosynthesis of L-cysteine from sulfate. This chain is Sulfite reductase [NADPH] hemoprotein beta-component, found in Aeromonas hydrophila subsp. hydrophila (strain ATCC 7966 / DSM 30187 / BCRC 13018 / CCUG 14551 / JCM 1027 / KCTC 2358 / NCIMB 9240 / NCTC 8049).